A 38-amino-acid polypeptide reads, in one-letter code: Photosystem I reaction center subunit IX (38 aa).

The chain crosses the membrane as a helical span at residues 4–24; the sequence is FLTTAPVVAAIWFTATAGILI.

Belongs to the PsaJ family.

Its subcellular location is the cellular thylakoid membrane. Functionally, may help in the organization of the PsaE and PsaF subunits. The protein is Photosystem I reaction center subunit IX of Synechococcus sp. (strain CC9902).